The primary structure comprises 393 residues: Riboflavin biosynthesis protein RibBA (393 aa).

The tract at residues 1–200 (MEFDEIKDAL…IESLVNYQKD (200 aa)) is DHBP synthase. D-ribulose 5-phosphate is bound by residues 27-28 (RE), Asp32, 139-143 (RTGHT), and Glu163. A Mg(2+)-binding site is contributed by Glu28. His142 provides a ligand contact to Mg(2+). Positions 201–393 (KDTSVELKAK…TKKIKMGHLI (193 aa)) are GTP cyclohydrolase II. 249 to 253 (RIHSA) contributes to the GTP binding site. Zn(2+) contacts are provided by Cys254, Cys265, and Cys267. Residues Gln270, 291 to 293 (EGR), and Thr313 each bind GTP. Asp325 acts as the Proton acceptor; for GTP cyclohydrolase activity in catalysis. Catalysis depends on Arg327, which acts as the Nucleophile; for GTP cyclohydrolase activity. GTP contacts are provided by Ser348 and Lys353.

This sequence in the N-terminal section; belongs to the DHBP synthase family. It in the C-terminal section; belongs to the GTP cyclohydrolase II family. It depends on Mg(2+) as a cofactor. Mn(2+) is required as a cofactor. Requires Zn(2+) as cofactor.

It catalyses the reaction D-ribulose 5-phosphate = (2S)-2-hydroxy-3-oxobutyl phosphate + formate + H(+). The catalysed reaction is GTP + 4 H2O = 2,5-diamino-6-hydroxy-4-(5-phosphoribosylamino)-pyrimidine + formate + 2 phosphate + 3 H(+). It participates in cofactor biosynthesis; riboflavin biosynthesis; 2-hydroxy-3-oxobutyl phosphate from D-ribulose 5-phosphate: step 1/1. The protein operates within cofactor biosynthesis; riboflavin biosynthesis; 5-amino-6-(D-ribitylamino)uracil from GTP: step 1/4. Functionally, catalyzes the conversion of D-ribulose 5-phosphate to formate and 3,4-dihydroxy-2-butanone 4-phosphate. In terms of biological role, catalyzes the conversion of GTP to 2,5-diamino-6-ribosylamino-4(3H)-pyrimidinone 5'-phosphate (DARP), formate and pyrophosphate. This Staphylococcus haemolyticus (strain JCSC1435) protein is Riboflavin biosynthesis protein RibBA.